The sequence spans 133 residues: Complexin-1 (133 aa).

Disordered regions lie at residues 1–40 and 85–112; these read MDFV…RLEA and AMEA…DEEE. Basic and acidic residues predominate over residues 15 to 40; it reads DMGKMLGGDEEKDPDAEKKEEERLEA. Residues 28 to 60 are a coiled coil; sequence PDAEKKEEERLEALRQAEEERAGKYAKMEAERE.

It belongs to the complexin/synaphin family. In terms of assembly, binds to the SNARE core complex containing SNAP25, VAMP2 and syntaxin-1. As to expression, nervous system. Present in electric organ (at protein level).

It localises to the cytoplasm. The protein resides in the cytosol. Its function is as follows. Positively regulates a late step in synaptic vesicle exocytosis. In Narke japonica (Japanese sleeper ray), this protein is Complexin-1.